A 329-amino-acid polypeptide reads, in one-letter code: Calcium homeostasis modulator protein (329 aa).

The Cytoplasmic segment spans residues 1-14 (MTTSINSVVTVFQN). Residues 15 to 35 (VFTNHGSTLLNGILIATTVGG) form a helical membrane-spanning segment. The Extracellular portion of the chain corresponds to 36 to 53 (QSLVRKLTFSCPCAYPLN). The helical transmembrane segment at 54-74 (IYHSLVFMFGPTAALLLIGIT) threads the bilayer. The Cytoplasmic segment spans residues 75–103 (VNSTTWKLAHGFFFRVRDTRHSWKTTCVS). The chain crosses the membrane as a helical span at residues 104–124 (WIEVLIQSSVAPIAWLFVVFL). Over 125-191 (DGGYYRCYRS…DASYLEAESQ (67 aa)) the chain is Extracellular. Residue Asn148 is glycosylated (N-linked (GlcNAc...) asparagine). Residues 192–212 (IYAWGLLLFSGVAAFLVITCN) traverse the membrane as a helical segment. Topologically, residues 213–329 (RMCDKYTLVQ…QIIVDETKED (117 aa)) are cytoplasmic.

Belongs to the CALHM family. In terms of tissue distribution, expressed in head and body wall muscles, IL2, ASG, ASI, ASJ, PHA and PHB sensory neurons, and spermatheca.

The protein localises to the cell membrane. In terms of biological role, pore-forming subunit of a voltage-gated ion channel. Permeable to monovalent cations, divalent cations and anions with selectivity Ca(2+) &gt; Mg(2+) &gt; Na(+) = K(+) &gt; Cl(-). Acts both as a voltage-gated and calcium-activated ion channel. Required for normal locomotion. The sequence is that of Calcium homeostasis modulator protein from Caenorhabditis elegans.